Here is a 507-residue protein sequence, read N- to C-terminus: GMP synthase [glutamine-hydrolyzing] (507 aa).

The Glutamine amidotransferase type-1 domain occupies 9-202 (TILIIDFGSQ…VHRIVGVKPG (194 aa)). Catalysis depends on Cys86, which acts as the Nucleophile. Residues His176 and Glu178 contribute to the active site. Positions 203–395 (WTMGAYREQA…LGLPDSFIGR (193 aa)) constitute a GMPS ATP-PPase domain. Position 230-236 (230-236 (SGGVDSS)) interacts with ATP.

In terms of assembly, homodimer.

It carries out the reaction XMP + L-glutamine + ATP + H2O = GMP + L-glutamate + AMP + diphosphate + 2 H(+). Its pathway is purine metabolism; GMP biosynthesis; GMP from XMP (L-Gln route): step 1/1. Functionally, catalyzes the synthesis of GMP from XMP. The protein is GMP synthase [glutamine-hydrolyzing] of Brucella melitensis biotype 1 (strain ATCC 23456 / CCUG 17765 / NCTC 10094 / 16M).